Here is a 96-residue protein sequence, read N- to C-terminus: Large ribosomal subunit protein bL28 (96 aa).

Residues methionine 1–asparagine 22 show a composition bias toward polar residues. A disordered region spans residues methionine 1 to lysine 24.

This sequence belongs to the bacterial ribosomal protein bL28 family.

This is Large ribosomal subunit protein bL28 from Sinorhizobium medicae (strain WSM419) (Ensifer medicae).